The sequence spans 463 residues: ATP synthase subunit beta (463 aa).

151–158 contributes to the ATP binding site; that stretch reads GGAGVGKT.

It belongs to the ATPase alpha/beta chains family. As to quaternary structure, F-type ATPases have 2 components, CF(1) - the catalytic core - and CF(0) - the membrane proton channel. CF(1) has five subunits: alpha(3), beta(3), gamma(1), delta(1), epsilon(1). CF(0) has three main subunits: a(1), b(2) and c(9-12). The alpha and beta chains form an alternating ring which encloses part of the gamma chain. CF(1) is attached to CF(0) by a central stalk formed by the gamma and epsilon chains, while a peripheral stalk is formed by the delta and b chains.

It is found in the cell membrane. The enzyme catalyses ATP + H2O + 4 H(+)(in) = ADP + phosphate + 5 H(+)(out). Functionally, produces ATP from ADP in the presence of a proton gradient across the membrane. The catalytic sites are hosted primarily by the beta subunits. This chain is ATP synthase subunit beta, found in Clostridium botulinum (strain Okra / Type B1).